Consider the following 310-residue polypeptide: Methionyl-tRNA formyltransferase (310 aa).

110 to 113 (SVLP) contacts (6S)-5,6,7,8-tetrahydrofolate. The segment at 283–310 (TVQPPGKKSMNAADWARGARAEDIRRAR) is disordered. A compositionally biased stretch (basic and acidic residues) spans 299–310 (RGARAEDIRRAR).

It belongs to the Fmt family.

The catalysed reaction is L-methionyl-tRNA(fMet) + (6R)-10-formyltetrahydrofolate = N-formyl-L-methionyl-tRNA(fMet) + (6S)-5,6,7,8-tetrahydrofolate + H(+). Attaches a formyl group to the free amino group of methionyl-tRNA(fMet). The formyl group appears to play a dual role in the initiator identity of N-formylmethionyl-tRNA by promoting its recognition by IF2 and preventing the misappropriation of this tRNA by the elongation apparatus. This Mycolicibacterium gilvum (strain PYR-GCK) (Mycobacterium gilvum (strain PYR-GCK)) protein is Methionyl-tRNA formyltransferase.